A 517-amino-acid polypeptide reads, in one-letter code: Peptide chain release factor 3 (517 aa).

The tr-type G domain maps to 9–269 (AKRRTFAIIS…DFVEHAPAPR (261 aa)). Residues 18–25 (SHPDAGKT), 86–90 (DTPGH), and 140–143 (NKLD) each bind GTP.

It belongs to the TRAFAC class translation factor GTPase superfamily. Classic translation factor GTPase family. PrfC subfamily.

It is found in the cytoplasm. Its function is as follows. Increases the formation of ribosomal termination complexes and stimulates activities of RF-1 and RF-2. It binds guanine nucleotides and has strong preference for UGA stop codons. It may interact directly with the ribosome. The stimulation of RF-1 and RF-2 is significantly reduced by GTP and GDP, but not by GMP. The protein is Peptide chain release factor 3 of Halorhodospira halophila (strain DSM 244 / SL1) (Ectothiorhodospira halophila (strain DSM 244 / SL1)).